The chain runs to 363 residues: AA9 family lytic polysaccharide monooxygenase I (363 aa).

An N-terminal signal peptide occupies residues 1–19 (MSLFKFAAFVLGTAGSVAG). Cu(2+) contacts are provided by histidine 20 and histidine 105. 2 cysteine pairs are disulfide-bonded: cysteine 75/cysteine 197 and cysteine 116/cysteine 120. The O2 site is built by histidine 183 and glutamine 192. Residue tyrosine 194 participates in Cu(2+) binding. Residues 248–257 (GSDSNTATSG) show a composition bias toward polar residues. 2 disordered regions span residues 248 to 270 (GSDS…PTTT) and 298 to 363 (SVSY…RTQS). Residues 258–270 (ASPPSTNFSPTTT) are compositionally biased toward low complexity. Residues 298–307 (SVSYSQTPWP) show a composition bias toward polar residues. Positions 308–329 (SSTATEATSASSSAGGSNNGHT) are enriched in low complexity. A compositionally biased stretch (basic residues) spans 342 to 354 (TGKKRSRLNRRRM).

This sequence belongs to the polysaccharide monooxygenase AA9 family. Cu(2+) serves as cofactor.

Its subcellular location is the secreted. It catalyses the reaction [(1-&gt;4)-beta-D-glucosyl]n+m + reduced acceptor + O2 = 4-dehydro-beta-D-glucosyl-[(1-&gt;4)-beta-D-glucosyl]n-1 + [(1-&gt;4)-beta-D-glucosyl]m + acceptor + H2O.. Functionally, lytic polysaccharide monooxygenase (LPMO) that depolymerizes crystalline and amorphous polysaccharides via the oxidation of scissile alpha- or beta-(1-4)-glycosidic bonds, yielding C1 or C4 oxidation products. Catalysis by LPMOs requires the reduction of the active-site copper from Cu(II) to Cu(I) by a reducing agent and H(2)O(2) or O(2) as a cosubstrate. The sequence is that of AA9 family lytic polysaccharide monooxygenase I from Emericella nidulans (strain FGSC A4 / ATCC 38163 / CBS 112.46 / NRRL 194 / M139) (Aspergillus nidulans).